The following is a 128-amino-acid chain: Cholecystokinin B (128 aa).

The first 20 residues, M1–A20, serve as a signal peptide directing secretion. The propeptide occupies H21–R108. Residues Y47 to R67 form a disordered region. Y110 is subject to Sulfotyrosine. Residue F116 is modified to Phenylalanine amide. The propeptide occupies S120–S128.

The protein belongs to the gastrin/cholecystokinin family. Post-translationally, the precursor is cleaved by proteases to produce a number of active cholecystokinins. As to expression, brain and gastrointestinal tract.

It is found in the secreted. The polypeptide is Cholecystokinin B (cck-b) (Xenopus laevis (African clawed frog)).